We begin with the raw amino-acid sequence, 156 residues long: Biotin carboxyl carrier protein of acetyl-CoA carboxylase (156 aa).

Positions 73–156 constitute a Biotinyl-binding domain; that stretch reads PAAAEISGHI…EFDEPLVVIE (84 aa). Lysine 122 carries the post-translational modification N6-biotinyllysine.

Homodimer.

The protein operates within lipid metabolism; fatty acid biosynthesis. Its function is as follows. This protein is a component of the acetyl coenzyme A carboxylase complex; first, biotin carboxylase catalyzes the carboxylation of the carrier protein and then the transcarboxylase transfers the carboxyl group to form malonyl-CoA. The chain is Biotin carboxyl carrier protein of acetyl-CoA carboxylase (accB) from Escherichia coli O6:H1 (strain CFT073 / ATCC 700928 / UPEC).